A 95-amino-acid chain; its full sequence is Small ribosomal subunit protein bS18 (95 aa).

This sequence belongs to the bacterial ribosomal protein bS18 family. As to quaternary structure, part of the 30S ribosomal subunit. Forms a tight heterodimer with protein bS6.

In terms of biological role, binds as a heterodimer with protein bS6 to the central domain of the 16S rRNA, where it helps stabilize the platform of the 30S subunit. The protein is Small ribosomal subunit protein bS18 of Rickettsia massiliae (strain Mtu5).